The chain runs to 691 residues: Beta-galactosidase III (691 aa).

Residues R121 and N159 each coordinate substrate. The active-site Proton donor is the E160. E318 functions as the Nucleophile in the catalytic mechanism. Substrate is bound by residues W326 and 366–369 (EKWH).

It belongs to the glycosyl hydrolase 42 family.

The enzyme catalyses Hydrolysis of terminal non-reducing beta-D-galactose residues in beta-D-galactosides.. In terms of biological role, specific for beta-D-anomer-linked galactoside substrates. Hydrolyzes o-nitrophenyl-beta-D-galactopyranoside (ONPG), chromogen 5-bromo-4-chloro-3-indolyl-beta-D-galactopyranoside (X-gal) and to a lesser extent lactose. Hydrolyzes p-nitrophenyl-beta-D-galacturonide very slightly. Does not hydrolyze maltose, sucrose, raffinose or melibiose. Has some transgalactosylation activity yielding galacto-oligosaccharides (GaOS), including O-beta-D-galactopyranosyl-(1,3)-O-beta-D-galactopyranosyl-(1-4)-D-glucopyranose. This is Beta-galactosidase III from Bifidobacterium longum subsp. infantis.